The following is a 487-amino-acid chain: ATP synthase subunit beta (487 aa).

Residue 171–178 (GGAGVGKT) coordinates ATP.

This sequence belongs to the ATPase alpha/beta chains family. In terms of assembly, F-type ATPases have 2 components, CF(1) - the catalytic core - and CF(0) - the membrane proton channel. CF(1) has five subunits: alpha(3), beta(3), gamma(1), delta(1), epsilon(1). CF(0) has three main subunits: a(1), b(2) and c(9-12). The alpha and beta chains form an alternating ring which encloses part of the gamma chain. CF(1) is attached to CF(0) by a central stalk formed by the gamma and epsilon chains, while a peripheral stalk is formed by the delta and b chains.

The protein resides in the cell membrane. The enzyme catalyses ATP + H2O + 4 H(+)(in) = ADP + phosphate + 5 H(+)(out). In terms of biological role, produces ATP from ADP in the presence of a proton gradient across the membrane. The catalytic sites are hosted primarily by the beta subunits. The protein is ATP synthase subunit beta of Leifsonia xyli subsp. xyli (strain CTCB07).